A 476-amino-acid polypeptide reads, in one-letter code: Glutamate--tRNA ligase (476 aa).

The 'HIGH' region signature appears at 9–19 (PSPTGTLHIGT). The short motif at 248–252 (KLSKR) is the 'KMSKS' region element. Lys-251 is an ATP binding site.

It belongs to the class-I aminoacyl-tRNA synthetase family. Glutamate--tRNA ligase type 1 subfamily. As to quaternary structure, monomer.

Its subcellular location is the cytoplasm. It catalyses the reaction tRNA(Glu) + L-glutamate + ATP = L-glutamyl-tRNA(Glu) + AMP + diphosphate. Functionally, catalyzes the attachment of glutamate to tRNA(Glu) in a two-step reaction: glutamate is first activated by ATP to form Glu-AMP and then transferred to the acceptor end of tRNA(Glu). The sequence is that of Glutamate--tRNA ligase from Prochlorococcus marinus (strain MIT 9303).